Consider the following 87-residue polypeptide: Toxin Cll4 (87 aa).

A signal peptide spans 1 to 19; it reads MNSLLMITACLALIGTVWA. Residues 20 to 85 form the LCN-type CS-alpha/beta domain; it reads KEGYIVNYHD…VWPLPKKRCN (66 aa). 4 cysteine pairs are disulfide-bonded: Cys31–Cys84, Cys35–Cys60, Cys44–Cys65, and Cys48–Cys67. Asn85 bears the Asparagine amide mark.

This sequence belongs to the long (4 C-C) scorpion toxin superfamily. Sodium channel inhibitor family. Beta subfamily. Expressed by the venom gland.

It is found in the secreted. Beta toxins bind voltage-independently at site-4 of sodium channels (Nav) and shift the voltage of activation toward more negative potentials thereby affecting sodium channel activation and promoting spontaneous and repetitive firing. The sequence is that of Toxin Cll4 from Centruroides limpidus (Mexican scorpion).